A 354-amino-acid polypeptide reads, in one-letter code: Protein-arginine kinase (354 aa).

Residues 24 to 254 (IVLSSRIRLA…QQIIHQEKTA (231 aa)) form the Phosphagen kinase C-terminal domain. ATP-binding positions include 27–31 (SSRIR), histidine 92, arginine 125, 176–180 (RASVM), and 207–212 (RGIYGE). The short motif at 337–342 (RDYRRA) is the RDXXRA motif of the pArg binding pocket involved in allosteric regulation element.

This sequence belongs to the ATP:guanido phosphotransferase family.

The enzyme catalyses L-arginyl-[protein] + ATP = N(omega)-phospho-L-arginyl-[protein] + ADP + H(+). Its activity is regulated as follows. Appears to be allosterically activated by the binding of pArg-containing polypeptides to the pArg-binding pocket localized in the C-terminal domain of McsB. Functionally, catalyzes the specific phosphorylation of arginine residues in a large number of proteins. Is part of the bacterial stress response system. Protein arginine phosphorylation has a physiologically important role and is involved in the regulation of many critical cellular processes, such as protein homeostasis, motility, competence, and stringent and stress responses, by regulating gene expression and protein activity. The protein is Protein-arginine kinase of Bacillus mycoides (strain KBAB4) (Bacillus weihenstephanensis).